The following is a 273-amino-acid chain: 4-hydroxy-tetrahydrodipicolinate reductase (273 aa).

NAD(+) contacts are provided by residues 11–16 (GAGGRM) and E36. R37 contributes to the NADP(+) binding site. NAD(+) is bound by residues 100–102 (GTT) and 124–127 (AANY). H157 serves as the catalytic Proton donor/acceptor. H158 lines the (S)-2,3,4,5-tetrahydrodipicolinate pocket. K161 functions as the Proton donor in the catalytic mechanism. Position 167–168 (167–168 (GT)) interacts with (S)-2,3,4,5-tetrahydrodipicolinate.

It belongs to the DapB family.

The protein resides in the cytoplasm. It catalyses the reaction (S)-2,3,4,5-tetrahydrodipicolinate + NAD(+) + H2O = (2S,4S)-4-hydroxy-2,3,4,5-tetrahydrodipicolinate + NADH + H(+). The catalysed reaction is (S)-2,3,4,5-tetrahydrodipicolinate + NADP(+) + H2O = (2S,4S)-4-hydroxy-2,3,4,5-tetrahydrodipicolinate + NADPH + H(+). It functions in the pathway amino-acid biosynthesis; L-lysine biosynthesis via DAP pathway; (S)-tetrahydrodipicolinate from L-aspartate: step 4/4. Functionally, catalyzes the conversion of 4-hydroxy-tetrahydrodipicolinate (HTPA) to tetrahydrodipicolinate. This is 4-hydroxy-tetrahydrodipicolinate reductase from Acinetobacter baylyi (strain ATCC 33305 / BD413 / ADP1).